Consider the following 521-residue polypeptide: GMC-type oxidoreductase acuG (521 aa).

Residues 14–15 (TV), 34–35 (EA), leucine 82, 90–93 (NYGL), alanine 492, and 503–504 (YQ) contribute to the FAD site.

This sequence belongs to the GMC oxidoreductase family. Requires FAD as cofactor.

It functions in the pathway secondary metabolite biosynthesis. Its function is as follows. GMC-type oxidoreductase; part of the gene cluster that mediates the biosynthesis of aculins. The pathway begins with the synthesis of 6-methylsalicylic acid by the polyketide synthase (PKS) acuA via condensation of acetate and malonate units. The 6-methylsalicylic acid decarboxylase acuB then catalyzes the decarboxylation of 6-methylsalicylic acid to yield m-cresol (also known as 3-methylphenol). These first reactions occur in the cytosol. The intermediate m-cresol is then transported into the endoplasmic reticulum where the cytochrome P450 monooxygenase acuC converts it to m-hydroxybenzyl alcohol, which is further converted to gentisyl alcohol by the cytochrome P450 monooxygenase acuD. Gentisyl alcohol is further oxidized by the oxidoreductase acuE that probably catalyzes hydroxylation of the aromatic ring. The aromatic system might then be opened by oxidation through a Baeyer-Villiger type of oxidation, which could be catalyzed by acuF, with the carboxylic acid at C-1 subsequently reduced to an aldehyde by acuG. Subsequently, a hemiacetal is formed, before the dehydrogenase acuH would reduce the double bond between C-4 and C-6. Finally, keto-enol tautomerism results in formation of aculinic acid, which exists as two diastereomers (both R/S configurations at C-1) by non-enzymatic hemiacetal formation. The carboxypeptidase acuI could be involved in the linking of aculinic acid to an aculene A moiety produced by the aculene biosynthesis cluster and which leads to the production of aculin A. AcuI may also be involved in the attachment of proline to aculinic acid to form epi-aculins A and B. The chain is GMC-type oxidoreductase acuG from Aspergillus aculeatus (strain ATCC 16872 / CBS 172.66 / WB 5094).